The following is a 312-amino-acid chain: Phosphate system positive regulatory protein PHO4 (312 aa).

The interval 1-31 (MGRTTSEGIHGFVDDLEPKSSILDKVGDFIT) is interaction with PHO80. The disordered stretch occupies residues 35-71 (KRHDGREDFNEQNDELNSQENHNSSENGNENENEQDS). The span at 49–62 (ELNSQENHNSSENG) shows a compositional bias: low complexity. A 9aaTAD motif is present at residues 75 to 83 (DDLDRAFEL). The transcription activation domain stretch occupies residues 75 to 99 (DDLDRAFELVEGMDMDWMMPSHAHH). Phosphoserine; by PHO85 occurs at positions 100, 114, 128, and 152. Composition is skewed to polar residues over residues 138 to 154 (TTSA…SSPY) and 196 to 210 (PSNS…TAKT). Residues 138-259 (TTSANKVTKN…DKRESHKHAE (122 aa)) form a disordered region. Residues 140-166 (SANKVTKNKSNSSPYLNKRRGKPGPDS) carry the Nuclear localization signal motif. The tract at residues 156 to 200 (NKRRGKPGPDSATSLFELPDSVIPTPKPKPKPKQYPKVILPSNST) is interaction with PHO80. The interval 201 to 218 (RRVSPVTAKTSSSAEGVV) is interaction with PHO2. Residues 203–227 (VSPVTAKTSSSAEGVVVASESPVIA) form an involved in oligomerization region. S204 bears the Phosphoserine mark. Residues 211–235 (SSSAEGVVVASESPVIAPHGSSHSR) show a composition bias toward low complexity. At S223 the chain carries Phosphoserine; by PHO85. 2 positions are modified to phosphoserine: S242 and S243. Over residues 248–259 (DDDKRESHKHAE) the composition is skewed to basic and acidic residues. Residues 250–306 (DKRESHKHAEQARRNRLAVALHELASLIPAEWKQQNVSAAPSKATTVEAACRYIRHL) form the bHLH domain.

As to quaternary structure, binds DNA as a homodimer. Interacts with transcription factor PHO2 and binds cooperatively to PHO5 UAS. Interacts with the cyclin-CDK PHO80-PHO85 and the CDK inhibitor (CKI) PHO81. In terms of processing, phosphorylated by the cyclin-CDK PHO80-PHO85 at five residues under high-phosphate conditions, preventing PHO4 from activating the structural PHO genes. Phosphorylation of Ser-114 and Ser-128 promotes nuclear export. Phosphorylation of Ser-152 decreases nuclear import. Phosphorylation of Ser-223 decreases the binding affinity for PHO2.

Its subcellular location is the cytoplasm. The protein localises to the nucleus. Functionally, transcriptional activator that regulates the expression of repressible phosphatase under phosphate starvation conditions. Binds to the upstream activating sequence (UAS) of several phosphatase encoding PHO genes. Inhibited by the cyclin-CDK PHO80-PHO85 under high-phosphate conditions. The polypeptide is Phosphate system positive regulatory protein PHO4 (PHO4) (Saccharomyces cerevisiae (strain ATCC 204508 / S288c) (Baker's yeast)).